A 109-amino-acid polypeptide reads, in one-letter code: NAD(P)H-quinone oxidoreductase subunit M (109 aa).

Belongs to the complex I NdhM subunit family. NDH-1 can be composed of about 15 different subunits; different subcomplexes with different compositions have been identified which probably have different functions.

It localises to the cellular thylakoid membrane. The enzyme catalyses a plastoquinone + NADH + (n+1) H(+)(in) = a plastoquinol + NAD(+) + n H(+)(out). It catalyses the reaction a plastoquinone + NADPH + (n+1) H(+)(in) = a plastoquinol + NADP(+) + n H(+)(out). In terms of biological role, NDH-1 shuttles electrons from an unknown electron donor, via FMN and iron-sulfur (Fe-S) centers, to quinones in the respiratory and/or the photosynthetic chain. The immediate electron acceptor for the enzyme in this species is believed to be plastoquinone. Couples the redox reaction to proton translocation, and thus conserves the redox energy in a proton gradient. Cyanobacterial NDH-1 also plays a role in inorganic carbon-concentration. This chain is NAD(P)H-quinone oxidoreductase subunit M, found in Microcystis aeruginosa (strain NIES-843 / IAM M-2473).